A 252-amino-acid chain; its full sequence is MLTVTCASLSGGQGKTTTALFLGRSLAARGKRVLMIDADPQSSLSFYLGCELSSEQATLLEVLKKEVDVVDSLWNLDDRLALIPADDALDSAQDFLATSGMGAIVLRRRLSPLQDQFDFCVIDAPPQRSQLCMTSVGAADQLLIPAEASSKGLNSLLRTLDLVAEMSEVEAFQGQILGILPFRDRWLGRTQAKQSQKSLESMQEVAAGHPILPSILESEQFKKAIDQGVSLAALGYADLEYPFRTILEKLGC.

ATP-binding residues include G11, G12, G14, K15, T16, T17, Q41, E147, K151, F182, R183, L216, E217, and S218. A Mg(2+)-binding site is contributed by T16.

Belongs to the ParA family. McdA subfamily. Self-associates (probably a homodimer), interacts with McdB probably via the C-terminus of both proteins. Shows no signs of filament formation. Homodimerizes in the presence of ATP, making extra nucleotide contacts than with ADP or AMP-PNP. Each subunit binds 1 ATP molecule; Glu-147, Lys-151 and Arg-183 cross the dimer interface to contact ATP in the other subunit, while Phe-182, Arg-183 and Phe-221 stack with the adenine base in their own subunit.

It localises to the cytoplasm. The protein localises to the nucleoid. It catalyses the reaction ATP + H2O = ADP + phosphate + H(+). McdA and McdB together mediate carboxysome (Cb) spacing, size, ultrastructure and probably inheritance in the cell. Together they prevent Cb aggregation. McdA is an ATPase that forms dynamic gradients on the nucleoid in response to adapter protein McdB, which associates with carboxysomes. The interplay between McdA gradients on the nucleoid and McdB-bound carboxysomes result in the equal spacing of Cbs along the cell length. Binds nucleoid DNA in an ATP-dependent manner; neither ADP nor ATP-gamma-S support DNA binding. Upon ATP-binding dimerizes and binds nucleoid DNA; the (McdA-ATP)2 dimer transiently binds McdB-bound Cbs. McdA's ATPase activity is stimulated 2-fold by DNA and McdB; ATP hydrolysis causes McdA release from DNA. Overexpression leads to loss of McdA oscillation, diffuse nucleoid staining by McdA with formation of large carboxysome aggregates that are in regions depleted of McdA; McdA remains nucleoid-associated. In terms of biological role, mutagenesis studies (characterized in vivo) suggest ATP binding, protein dimerization and a conformational change are necessary for nucleoid DNA-binding and binding to McdB-bound Cbs, which tethers Cbs to the nucleoid. Eventual McdB-stimulated ATP hydrolysis causes de-dimerization of McdA which no longer binds the nucleoid and releases McdB and Cbs. McdB-bound Cbs then move to a region of higher McdA concentration, distributing Cbs across the nucleoid. Functionally, incorrect positioning (aggregation) of carboxysomes results in reduced CO(2) fixation by encapsulated ribulose-1,5-bisphosphate carboxylase (RuBisCO, cbbL/cbbS), which leads to slower growth, cell elongation, asymmetric cell division and an increase in RuBisCO levels. The polypeptide is Maintenance of carboxysome distribution protein A (Synechococcus elongatus (strain ATCC 33912 / PCC 7942 / FACHB-805) (Anacystis nidulans R2)).